Here is a 371-residue protein sequence, read N- to C-terminus: Putative glutamate--cysteine ligase 2 (371 aa).

This sequence belongs to the glutamate--cysteine ligase type 2 family. YbdK subfamily.

It carries out the reaction L-cysteine + L-glutamate + ATP = gamma-L-glutamyl-L-cysteine + ADP + phosphate + H(+). In terms of biological role, ATP-dependent carboxylate-amine ligase which exhibits weak glutamate--cysteine ligase activity. This is Putative glutamate--cysteine ligase 2 from Nitrosospira multiformis (strain ATCC 25196 / NCIMB 11849 / C 71).